A 448-amino-acid chain; its full sequence is Protein kinase C and casein kinase substrate in neurons protein 2 (448 aa).

The F-BAR domain maps to 11 to 282; it reads VEVSSDSFWE…NIKTADAVED (272 aa). The stretch at 25-274 forms a coiled coil; that stretch reads KRTVKRIDDG…NIYRELEQNI (250 aa). Residues 315–386 are disordered; the sequence is SRREKKKASD…DTNPFDEDTS (72 aa). Positions 329 to 358 are enriched in polar residues; it reads TGINQTGDQVSQPNKHSSVSSYEKNQSYPT. The NPF1 signature appears at 367–369; the sequence is NPF. The NPF2 motif lies at 379-381; it reads NPF. The SH3 domain occupies 388–448; sequence VMEVRVRALY…YPANYVEPIQ (61 aa).

It belongs to the PACSIN family. Post-translationally, phosphorylated on serine residues. As to expression, detected in intestine, cardiac muscle, lung and brain (at protein level). Expressed in all tissues tested, including, gizzard, liver, cardiac muscle, skeletal muscle and skin.

The protein resides in the cytoplasm. It is found in the cytoskeleton. The protein localises to the cytoplasmic vesicle membrane. It localises to the cell projection. Its subcellular location is the ruffle membrane. The protein resides in the early endosome. It is found in the recycling endosome membrane. The protein localises to the cell membrane. It localises to the membrane. Its subcellular location is the caveola. The protein resides in the cell junction. It is found in the focal adhesion. Functionally, regulates the morphogenesis and endocytosis of caveolae. Lipid-binding protein that is able to promote the tubulation of the phosphatidic acid-containing membranes it preferentially binds. Plays a role in intracellular vesicle-mediated transport. Involved in the endocytosis of cell-surface receptors like the EGF receptor, contributing to its internalization in the absence of EGF stimulus. Essential for endothelial organization in sprouting angiogenesis, modulates CDH5-based junctions. Facilitates endothelial front-rear polarity during migration by recruiting EHD4 and MICALL1 to asymmetric adherens junctions between leader and follower cells. The protein is Protein kinase C and casein kinase substrate in neurons protein 2 (PACSIN2) of Gallus gallus (Chicken).